The chain runs to 530 residues: Chaperonin GroEL 2 (530 aa).

ATP-binding positions include 30-33 (TLGP), Lys-51, 87-91 (DGTTT), Gly-415, 479-481 (NAA), and Asp-495.

The protein belongs to the chaperonin (HSP60) family. As to quaternary structure, forms a cylinder of 14 subunits composed of two heptameric rings stacked back-to-back. Interacts with the co-chaperonin GroES.

It is found in the cytoplasm. It catalyses the reaction ATP + H2O + a folded polypeptide = ADP + phosphate + an unfolded polypeptide.. Together with its co-chaperonin GroES, plays an essential role in assisting protein folding. The GroEL-GroES system forms a nano-cage that allows encapsulation of the non-native substrate proteins and provides a physical environment optimized to promote and accelerate protein folding. This chain is Chaperonin GroEL 2, found in Vibrio cholerae serotype O1 (strain ATCC 39315 / El Tor Inaba N16961).